The chain runs to 824 residues: MSSLLNFYRKVLNVPLSLLVKSRAIPTDPVKELNLNLEQPIIYVLPYTSQTDLLILQKNCLSLNLPDPLQNNELNGQSLPRYVFLDEGRRFFKSKGAKSETESIFYRYLDLHRNNESLDVQLIPASVLWGRSPGKESEPHLRLMSSFQRIISMIWFGRDNFVRFSQALSLKYMVAEHGADEGIAQKLARVAKIHFAKQRYSAMGPRLPDRQAMFNKIIQSPAIKVAIEEEAKTKKISIEKARQEAEKIVNEIAADVSHESLRIADRVLSWLWNKLYQGINVQNGDRVRKLALEGHEIVYVPCHRSHMDYLLLSYLLYHQGLVPPHIAAGINLNFFPAGPIFRSWGAFFIRRTFKGNRLYSTIFREYLAELFYRGYSVEYFIEGGRSRTGRLLEPKTGMMSMTLQALQRGLTRPISIVPVYIGYEHVLEVDTYAKELRGAEKEKENAGLVLRVIKKLKNLGQCYVNFAEPIQVNNYLNQHFPEWKESQAEDSRPKWLNEAVDSVAHQVMININKAAAINAKNLIGSVLLASRQRALAREQLIEQVDSYLQLFKNVSYSDDAIVPNDNAEEMLNHVLTLPRSGVISEKDSFGEMIRLDRESAVLMTYYRNNIQHLFVLPSLVASIILHHESVSKDLIIKTVNRIYPFLKAELFLHFEENDVRNQVEAILTEFSAQRIVKYESDVLQINCVRVRALQLHAAGVREILQRYYISLSILLEHPEISRAALEKESRSIAQRLSILHGINAPEFFDKALFSTFSASLKAQGYFDSEGNCILEKAKEAEEILRSLISVEVQLTIQGAMEKVEEVENTETVVKTAEAVTEKNE.

Positions 302–307 (CHRSHM) match the HXXXXD motif motif.

It belongs to the GPAT/DAPAT family.

The protein resides in the cell inner membrane. The enzyme catalyses sn-glycerol 3-phosphate + an acyl-CoA = a 1-acyl-sn-glycero-3-phosphate + CoA. Its pathway is phospholipid metabolism; CDP-diacylglycerol biosynthesis; CDP-diacylglycerol from sn-glycerol 3-phosphate: step 1/3. This chain is Glycerol-3-phosphate acyltransferase, found in Actinobacillus pleuropneumoniae serotype 5b (strain L20).